Reading from the N-terminus, the 2025-residue chain is MSNRPNNNPGGSLRRSQRNTAGAQPQDDSIGGRSCSSSSAVIVPQPEDPDRANTSERQKTGQVPKKDNSRGVKRSASPDYNRTNSPSSAKKPRAFQHIESFSETNKPHSKSKKRHLDQEQQLKSAQLPSTSKAHTRKSVAAGSSRNQKRKRTESSCVKSGSGSESTGAEERSAKPIKLASKSATSAKAGCSTITDSSSAASTSSSSSAIASASSTVPAGARVKQGKDQNKARRSRSASSPSPRRSSREKEQSKTGGSSKFDWAARFSPKVSLPKTKLSLPGSSKSETSKPGPSGLQAKLASLRKSTKKRSESPPAELPSLRRSTRQKTTGSCASTSRRGSGLGKRGAAEARRQEKMADPESNQETVNSSAARTDEAPQGAAASSSVAGAVGMTTSGESESDDSEMGRLQALLEARGLPPHLFGPLGPRMSQLFHRTIGSGASSKAQQLLQGLQASDESQQLQAVIEMCQLLVMGNEETLGGFPVKSVVPALITLLQMEHNFDIMNHACRALTYMMEALPRSSAVVVDAIPVFLEKLQVIQCIDVAEQALTALEMLSRRHSKAILQAGGLADCLLYLEFFSINAQRNALAIAANCCQSITPDEFHFVADSLPLLTQRLTHQDKKSVESTCLCFARLVDNFQHEENLLQQVASKDLLTNVQQLLVVTPPILSSGMFIMVVRMFSLMCSNCPTLAVQLMKQNIAETLHFLLCGASNGSCQEQIDLVPRSPQELYELTSLICELMPCLPKEGIFAVDTMLKKGNAQNTDGAIWQWRDDRGLWHPYNRIDSRIIEAAHQVGEDEISLSTLGRVYTIDFNSMQQINEDTGTARAIQRKPNPLANSNTSGYSELKKDDARAQLMKEDPELAKSFIKTLFGVLYEVYSSSAGPAVRHKCLRAILRIIYFADAELLKDVLKNHAVSSHIASMLSSQDLKIVVGALQMAEILMQKLPDIFSVYFRREGVMHQVKHLAESESLLTSPPKACTNGSGSLGSTTPASSGTATAATNASADLGSPSLQHSRDDSLDLSPQGRLSDVLKRKRLPKRGPRRPKYSPPRDDDKVDNQAKSPTTTQSPKSSFLASLNPKTWGRLSAQSNSNNIEPARTAGVSGLARAASKDTISNNREKIKGWIKEQAHKFVERYFSSENMDGSNPALNVLQRLCAATEQLNLQVDGGAECLVEIRSIVSESDVSSFEIQHSGFVKQLLLYLTSKNEKDAVGREIRLKRFLHVFFSSPLPGEEPVGRVEPVGHAPLLALVHKMNNCLSQMEQFPVKVHDFPSGNGAGGSFSLNRGSQALKFFNTHQLKCQLQRHPDCANVKQWKGGPVKIDPLALVQAIERYLVVRGYGRVREDDEDSDDDGSDEEIDESLAAQFLNSGNVRHRLQFYIGEHLLPYNMTVYQAVRQFSVQAEDERESTDDESNPLGRAGIWTKTHTIWYKPVREDEESTKDCVGGKRGRAQTAPTKTSPRNAKKHDELWHDGVCPSVANPLEVYLIPTPPENITFEDPSLDVILLLRVLHAISRYWYYLYDNAMCKEIIPTSEFINSKLTAKANRQLQDPLVIMTGNIPTWLTELGKTCPFFFPFDTRQMLFYVTAFDRDRAMQRLLDTNPEINQSDSQDSRVAPRLDRKKRTVNREELLKQAESVMQDLGSSRAMLEIQYENEVGTGLGPTLEFYALVSQELQRADLCLWRGEEVTLSNPKGSQEGTKYIQNLQGLFALPFGRTAKPAHIAKVKMKFRFLGKLMAKAIMDFRLVDLPLGLPFYKWMLRQETSLTSHDLFDIDPVVARSVYHLEDIVRQKKRLEQDKSQTKESLQYALETLTMNGCSVEDLGLDFTLPGFPNIELKKGGKDIPVTIHNLEEYLRLVIFWALNEGVCRQFDSFRDGFESVFPLCHLQYFYPEELDQLLCGSKADTWDAKTLMECCRPDHGYTHDSRAVKFLFEILSSFDNEQQRLFLQFVTGSPRLPVGGFRSLNPPLTIVRKTFESTENPDDFLPSVMTCVNYLKLPDYSSIDIMRDKLLIAAREGQQSFHLS.

A compositionally biased stretch (polar residues) spans 1-10 (MSNRPNNNPG). Positions 1–404 (MSNRPNNNPG…SGESESDDSE (404 aa)) are disordered. At Ser-2 the chain carries N-acetylserine. At Ser-12 the chain carries Phosphoserine. The segment covering 18 to 27 (RNTAGAQPQD) has biased composition (polar residues). Residues 48–70 (DPDRANTSERQKTGQVPKKDNSR) show a composition bias toward basic and acidic residues. Residues Ser-77, Ser-85, and Ser-100 each carry the phosphoserine modification. Residues 78-88 (PDYNRTNSPSS) are compositionally biased toward polar residues. Positions 119–132 (EQQLKSAQLPSTSK) are enriched in polar residues. Composition is skewed to low complexity over residues 154 to 166 (SSCVKSGSGSEST) and 177 to 215 (KLASKSATSAKAGCSTITDSSSAASTSSSSSAIASASST). Lys-181 is subject to N6-acetyllysine. The span at 280 to 290 (PGSSKSETSKP) shows a compositional bias: polar residues. Ser-310 and Ser-312 each carry phosphoserine. Over residues 326-338 (QKTTGSCASTSRR) the composition is skewed to polar residues. Over residues 346–358 (GAAEARRQEKMAD) the composition is skewed to basic and acidic residues. Residues 360-371 (ESNQETVNSSAA) show a composition bias toward polar residues. The segment covering 379-397 (GAAASSSVAGAVGMTTSGE) has biased composition (low complexity). Residues 755–869 (MLKKGNAQNT…DPELAKSFIK (115 aa)) form the WWE domain. A disordered region spans residues 970–1077 (ESLLTSPPKA…QSPKSSFLAS (108 aa)). A Phosphoserine modification is found at Ser-975. Low complexity predominate over residues 983–1006 (GSGSLGSTTPASSGTATAATNASA). Residues Ser-1024 and Ser-1030 each carry the phosphoserine modification. The segment covering 1034 to 1047 (KRKRLPKRGPRRPK) has biased composition (basic residues). The residue at position 1049 (Ser-1049) is a Phosphoserine. The segment covering 1050–1059 (PPRDDDKVDN) has biased composition (basic and acidic residues). The span at 1062–1073 (KSPTTTQSPKSS) shows a compositional bias: low complexity. Ser-1063, Ser-1350, Ser-1355, Ser-1362, and Ser-1409 each carry phosphoserine. Thr-1410 bears the Phosphothreonine mark. 2 disordered regions span residues 1441 to 1466 (TKDCVGGKRGRAQTAPTKTSPRNAKK) and 1601 to 1620 (TNPEINQSDSQDSRVAPRLD). Lys-1458 is subject to N6-acetyllysine. Ser-1460 carries the post-translational modification Phosphoserine. Residues 1529–1603 (EIIPTSEFIN…AMQRLLDTNP (75 aa)) form a K-box region. The HECT domain maps to 1918 to 2025 (PDHGYTHDSR…REGQQSFHLS (108 aa)). Cys-1992 (glycyl thioester intermediate) is an active-site residue.

It belongs to the UPL family. K-HECT subfamily. As to quaternary structure, interacts with MYC; leading to disrupt interaction with isoform p19ARF/ARF of CDKN2A. Interacts with TRADD; leading to disrupt interaction with isoform p19ARF/ARF of CDKN2A. Interacts with SMARCC1; leading to disrupt interaction with SMARCE1.

The protein resides in the nucleus. Its subcellular location is the nucleoplasm. The enzyme catalyses S-ubiquitinyl-[E2 ubiquitin-conjugating enzyme]-L-cysteine + [acceptor protein]-L-lysine = [E2 ubiquitin-conjugating enzyme]-L-cysteine + N(6)-ubiquitinyl-[acceptor protein]-L-lysine.. It functions in the pathway protein modification; protein ubiquitination. Its function is as follows. E3 ubiquitin-protein ligase involved in ubiquitin fusion degradation (UFD) pathway and regulation of DNA repair. Part of the ubiquitin fusion degradation (UFD) pathway, a process that mediates ubiquitination of protein at their N-terminus, regardless of the presence of lysine residues in target proteins. Acts as a key regulator of DNA damage response by acting as a suppressor of RNF168, an E3 ubiquitin-protein ligase that promotes accumulation of 'Lys-63'-linked histone H2A and H2AX at DNA damage sites, thereby acting as a guard against excessive spreading of ubiquitinated chromatin at damaged chromosomes. In normal cells, mediates ubiquitination and degradation of isoform p19ARF/ARF of CDKN2A, a lysine-less tumor suppressor required for p53/TP53 activation under oncogenic stress. In cancer cells, however, isoform p19ARF/ARF and TRIP12 are located in different cell compartments, preventing isoform p19ARF/ARF ubiquitination and degradation. Does not mediate ubiquitination of isoform p16-INK4a of CDKN2A. Also catalyzes ubiquitination of NAE1 and SMARCE1, leading to their degradation. Ubiquitination and degradation of target proteins is regulated by interaction with proteins such as MYC, TRADD or SMARCC1, which disrupt the interaction between TRIP12 and target proteins. Mediates ubiquitination of ASXL1: following binding to N(6)-methyladenosine methylated DNA, ASXL1 is ubiquitinated by TRIP12, leading to its degradation and subsequent inactivation of the PR-DUB complex. The protein is E3 ubiquitin-protein ligase TRIP12 (Trip12) of Mus musculus (Mouse).